We begin with the raw amino-acid sequence, 361 residues long: Phosphoserine aminotransferase (361 aa).

Position 43 (arginine 43) interacts with L-glutamate. Residues 77-78, tryptophan 103, threonine 153, aspartate 173, and glutamine 196 contribute to the pyridoxal 5'-phosphate site; that span reads AS. Position 197 is an N6-(pyridoxal phosphate)lysine (lysine 197). 238-239 is a binding site for pyridoxal 5'-phosphate; sequence NT.

It belongs to the class-V pyridoxal-phosphate-dependent aminotransferase family. SerC subfamily. As to quaternary structure, homodimer. Pyridoxal 5'-phosphate is required as a cofactor.

The protein localises to the cytoplasm. It carries out the reaction O-phospho-L-serine + 2-oxoglutarate = 3-phosphooxypyruvate + L-glutamate. It catalyses the reaction 4-(phosphooxy)-L-threonine + 2-oxoglutarate = (R)-3-hydroxy-2-oxo-4-phosphooxybutanoate + L-glutamate. The protein operates within amino-acid biosynthesis; L-serine biosynthesis; L-serine from 3-phospho-D-glycerate: step 2/3. Its pathway is cofactor biosynthesis; pyridoxine 5'-phosphate biosynthesis; pyridoxine 5'-phosphate from D-erythrose 4-phosphate: step 3/5. Its function is as follows. Catalyzes the reversible conversion of 3-phosphohydroxypyruvate to phosphoserine and of 3-hydroxy-2-oxo-4-phosphonooxybutanoate to phosphohydroxythreonine. This Pseudomonas paraeruginosa (strain DSM 24068 / PA7) (Pseudomonas aeruginosa (strain PA7)) protein is Phosphoserine aminotransferase.